Consider the following 168-residue polypeptide: Photosystem I assembly protein Ycf3 (168 aa).

3 TPR repeats span residues 35 to 68 (AFTY…EIDP), 72 to 105 (SYIL…NPFL), and 120 to 153 (GEEA…TPGN).

The protein belongs to the Ycf3 family.

Its subcellular location is the plastid. It localises to the chloroplast thylakoid membrane. In terms of biological role, essential for the assembly of the photosystem I (PSI) complex. May act as a chaperone-like factor to guide the assembly of the PSI subunits. The protein is Photosystem I assembly protein Ycf3 of Nuphar advena (Common spatterdock).